The sequence spans 308 residues: Glutamyl-Q tRNA(Asp) synthetase (308 aa).

L-glutamate is bound by residues 19–23 (RFAPS) and Glu-55. The short motif at 22 to 32 (PSPSGELHFGS) is the 'HIGH' region element. Zn(2+) is bound by residues Cys-111, Cys-113, Tyr-125, and Cys-129. L-glutamate-binding residues include Tyr-182 and Arg-200. The 'KMSKS' region motif lies at 238–242 (KLSKQ). An ATP-binding site is contributed by Lys-241.

Belongs to the class-I aminoacyl-tRNA synthetase family. GluQ subfamily. It depends on Zn(2+) as a cofactor.

Catalyzes the tRNA-independent activation of glutamate in presence of ATP and the subsequent transfer of glutamate onto a tRNA(Asp). Glutamate is transferred on the 2-amino-5-(4,5-dihydroxy-2-cyclopenten-1-yl) moiety of the queuosine in the wobble position of the QUC anticodon. The polypeptide is Glutamyl-Q tRNA(Asp) synthetase (Shigella flexneri).